A 510-amino-acid polypeptide reads, in one-letter code: Probable DNA ligase (510 aa).

Glu-210 contacts ATP. Catalysis depends on Lys-212, which acts as the N6-AMP-lysine intermediate. Positions 217, 232, 261, 296, 367, and 373 each coordinate ATP.

The protein belongs to the ATP-dependent DNA ligase family. Mg(2+) serves as cofactor.

The catalysed reaction is ATP + (deoxyribonucleotide)n-3'-hydroxyl + 5'-phospho-(deoxyribonucleotide)m = (deoxyribonucleotide)n+m + AMP + diphosphate.. Its function is as follows. DNA ligase that seals nicks in double-stranded DNA during DNA replication, DNA recombination and DNA repair. The polypeptide is Probable DNA ligase (Saccharopolyspora erythraea (strain ATCC 11635 / DSM 40517 / JCM 4748 / NBRC 13426 / NCIMB 8594 / NRRL 2338)).